The chain runs to 331 residues: Myc-associated zinc finger protein (331 aa).

Disordered regions lie at residues 46 to 65 (AQSP…APAA) and 108 to 131 (TVDT…SAPA). Residues 117–127 (PPAPPPPPPAV) show a composition bias toward pro residues. 4 consecutive C2H2-type zinc fingers follow at residues 177-199 (YICA…EAIH), 266-288 (HACE…KLSH), 294-316 (YQCP…VRSH), and 324-331 (YNCSHCGK).

Interacts with BPTF. Ubiquitously expressed.

The protein localises to the nucleus. In terms of biological role, transcriptional regulator. Acts as a transcriptional activator that binds to purine-rich GAGA sites found in the promoter of many genes including insulin I and II and islet amyloid polypeptide. This is Myc-associated zinc finger protein (MAZ) from Mesocricetus auratus (Golden hamster).